Reading from the N-terminus, the 119-residue chain is Protein TusC (119 aa).

This sequence belongs to the DsrF/TusC family. Heterohexamer, formed by a dimer of trimers. The hexameric TusBCD complex contains 2 copies each of TusB, TusC and TusD. The TusBCD complex interacts with TusE.

Its subcellular location is the cytoplasm. Part of a sulfur-relay system required for 2-thiolation of 5-methylaminomethyl-2-thiouridine (mnm(5)s(2)U) at tRNA wobble positions. This Sodalis glossinidius (strain morsitans) protein is Protein TusC.